A 182-amino-acid chain; its full sequence is D-lyxose ketol-isomerase (182 aa).

Mn(2+)-binding residues include His74, His76, Glu87, and His142.

The protein belongs to the D-lyxose ketol-isomerase family. In terms of assembly, homodimer. Mn(2+) is required as a cofactor.

The enzyme catalyses D-lyxose = D-xylulose. Sugar isomerase that catalyzes the reversible isomerization of D-lyxose to D-xylulose. Shows weak activity with D-mannose and L-ribose. This Cohnella laeviribosi protein is D-lyxose ketol-isomerase.